The primary structure comprises 452 residues: Trigger factor (452 aa).

A PPIase FKBP-type domain is found at 162-247 (GDTVTIDYKG…IHEVKSKQLP (86 aa)). The segment at 427–452 (AKAKLEAKEAEEAEDKEEAEDKKENK) is disordered.

This sequence belongs to the FKBP-type PPIase family. Tig subfamily.

It is found in the cytoplasm. The enzyme catalyses [protein]-peptidylproline (omega=180) = [protein]-peptidylproline (omega=0). Functionally, involved in protein export. Acts as a chaperone by maintaining the newly synthesized protein in an open conformation. Functions as a peptidyl-prolyl cis-trans isomerase. This is Trigger factor from Lactobacillus helveticus (strain DPC 4571).